A 546-amino-acid polypeptide reads, in one-letter code: Probable protein kinase UbiB (546 aa).

The region spanning 124–502 (DFEIKPLASA…HVRQGQSRYF (379 aa)) is the Protein kinase domain. ATP contacts are provided by residues 130 to 138 (LASASIAQV) and lysine 153. Residue aspartate 288 is the Proton acceptor of the active site. 2 consecutive transmembrane segments (helical) span residues 501–521 (YFLGIGATLVLSGTFLLVSRP) and 522–542 (EWGLMPGWLMAGGLIAWFVGW).

The protein belongs to the ABC1 family. UbiB subfamily.

It is found in the cell inner membrane. Its pathway is cofactor biosynthesis; ubiquinone biosynthesis [regulation]. In terms of biological role, is probably a protein kinase regulator of UbiI activity which is involved in aerobic coenzyme Q (ubiquinone) biosynthesis. The chain is Probable protein kinase UbiB from Shigella boydii serotype 18 (strain CDC 3083-94 / BS512).